The following is a 265-amino-acid chain: tRNA(His) guanylyltransferase (265 aa).

Mg(2+)-binding residues include Asp29, Gly30, and Asp76. GTP is bound by residues 29 to 34 (DGKGFH) and 75 to 76 (SD).

It belongs to the tRNA(His) guanylyltransferase family. The cofactor is Mg(2+).

It catalyses the reaction a 5'-end ribonucleotide-tRNA(His) + GTP + ATP + H2O = a 5'-end phospho-guanosine-ribonucleotide-tRNA(His) + AMP + 2 diphosphate + H(+). Adds a GMP to the 5'-end of tRNA(His) after transcription and RNase P cleavage. The protein is tRNA(His) guanylyltransferase (THG1) of Debaryomyces hansenii (strain ATCC 36239 / CBS 767 / BCRC 21394 / JCM 1990 / NBRC 0083 / IGC 2968) (Yeast).